The primary structure comprises 425 residues: Adenosylhomocysteinase (425 aa).

3 residues coordinate substrate: Thr60, Asp132, and Glu157. 158–160 (TTT) provides a ligand contact to NAD(+). Residues Lys187 and Asp191 each coordinate substrate. NAD(+) is bound by residues Asn192, 221–226 (GYGWCG), Glu244, Asn279, 300–302 (SGH), and Asn347.

It belongs to the adenosylhomocysteinase family. The cofactor is NAD(+).

The protein resides in the cytoplasm. It catalyses the reaction S-adenosyl-L-homocysteine + H2O = L-homocysteine + adenosine. Its pathway is amino-acid biosynthesis; L-homocysteine biosynthesis; L-homocysteine from S-adenosyl-L-homocysteine: step 1/1. In terms of biological role, may play a key role in the regulation of the intracellular concentration of adenosylhomocysteine. The protein is Adenosylhomocysteinase of Synechocystis sp. (strain ATCC 27184 / PCC 6803 / Kazusa).